The sequence spans 386 residues: Succinate--CoA ligase [ADP-forming] subunit beta (386 aa).

The ATP-grasp domain maps to 9–244 (KDLLASYDVP…PSQENVRDVL (236 aa)). ATP contacts are provided by residues K46, 53 to 55 (GRG), V102, and E107. The Mg(2+) site is built by N199 and D213. Substrate is bound by residues N264 and 321–323 (GIM).

Belongs to the succinate/malate CoA ligase beta subunit family. As to quaternary structure, heterotetramer of two alpha and two beta subunits. Requires Mg(2+) as cofactor.

The enzyme catalyses succinate + ATP + CoA = succinyl-CoA + ADP + phosphate. The catalysed reaction is GTP + succinate + CoA = succinyl-CoA + GDP + phosphate. Its pathway is carbohydrate metabolism; tricarboxylic acid cycle; succinate from succinyl-CoA (ligase route): step 1/1. In terms of biological role, succinyl-CoA synthetase functions in the citric acid cycle (TCA), coupling the hydrolysis of succinyl-CoA to the synthesis of either ATP or GTP and thus represents the only step of substrate-level phosphorylation in the TCA. The beta subunit provides nucleotide specificity of the enzyme and binds the substrate succinate, while the binding sites for coenzyme A and phosphate are found in the alpha subunit. The polypeptide is Succinate--CoA ligase [ADP-forming] subunit beta (Chlamydia pneumoniae (Chlamydophila pneumoniae)).